The primary structure comprises 346 residues: Probable RNA methyltransferase Pmen_2155 (346 aa).

The active-site Proton acceptor is the glutamate 91. The Radical SAM core domain maps to 94–320; the sequence is LLPRDGLCIS…TKVRNSAGQD (227 aa). Residues cysteine 101 and cysteine 325 are joined by a disulfide bond. Cysteine 108, cysteine 112, and cysteine 115 together coordinate [4Fe-4S] cluster. Residues 153-154, serine 183, 206-208, and asparagine 282 contribute to the S-adenosyl-L-methionine site; these read GE and SLH. Cysteine 325 serves as the catalytic S-methylcysteine intermediate.

It belongs to the radical SAM superfamily. RlmN family. [4Fe-4S] cluster is required as a cofactor.

The protein resides in the cytoplasm. In Ectopseudomonas mendocina (strain ymp) (Pseudomonas mendocina), this protein is Probable RNA methyltransferase Pmen_2155.